A 925-amino-acid chain; its full sequence is MAPPALRPENAIRRADELVSVGEPMAALQSLFDLLSSRRSRFADAATLEPIIFKFLELGVELRKGKMIKEGLYQYKKHMQHTPEGLISVGAVARKFIDLIETKMTNIQAQTDAKEESNKDQAEEDLEGGVTPENLLVSVYEQEQTVGGFNNDDVSAWLRFTWESYRTTLDFLRNNSQLEITYAGVVNRTMQFCYKYNRKNEFKRLAEMLRQHLDAANYQQQRYGHHTVDLSDPDTLQRYSDQRFQQVNVSVKLELWHEAFRSIEDVHHLMRLSKRAPKPSVLANYYENLAKIFFVSGNYLLHAAAWEKFYNLYLKNPNASEEDFKFYSSQFVLSALAIQLDDLPIAGFDPQIRLCDLLDLESKPKRKDLITAAGEQQVVEKADADILKFFNILETNFDVKSAKSQLSALLPNLVEKPYFAQYVAPLRNLFIRRSIIEVSKAQTSIHLVELHEMLSLPAPFELSVFELEKYLIQAAMDDYVSISIDHETDTVSFAQDPFDAWQASLVEVPESSTSDEAKNSESEEETSQETHADEEQNEQVFTRNSEVRSKLTDLSKILKANEEYENGSYYYRVKLVREELIRRKEEVIKLEKEAAEIRAKSNAERKKRSEEENKILAKKALEERQRRMAEEKAAVESSMEKEAERRAEEMMEREREAIHEQEMKKLIAETNANGVIHIDPKEAKNLTSDKINQMVIEQVAKNKKDLTERMTYAFKKLDHLERAYRQMELPLLEKDAEEQKKRDRENYDNFKKKLIETSKADYEKKLALHQRLNKIYSTFNQYKSSVIAEKKEELEKQRALKEAQLEEAKKQRIEQVRKERYEAKVAEIQAAIEAEAAEKEALAKEEELAKRRAERERINKERDEIARKQREIEELLEKKNGSSRSSPVPSTPTPAPAPAQTAPVSNKPMSMAEKLRLKRMNAGRG.

The segment at 108–127 (QAQTDAKEESNKDQAEEDLE) is disordered. Residues 112-121 (DAKEESNKDQ) show a composition bias toward basic and acidic residues. A PCI domain is found at 324–498 (FKFYSSQFVL…DTVSFAQDPF (175 aa)). 2 disordered regions span residues 509–544 (PESS…FTRN) and 839–925 (KEAL…AGRG). 2 coiled-coil regions span residues 534–666 (EEQN…MKKL) and 785–885 (SVIA…SSRS). The segment covering 839–880 (KEALAKEEELAKRRAERERINKERDEIARKQREIEELLEKKN) has biased composition (basic and acidic residues). Residues 916-925 (RLKRMNAGRG) show a composition bias toward basic residues.

This sequence belongs to the eIF-3 subunit A family. Component of the eukaryotic translation initiation factor 3 (eIF-3) complex.

It localises to the cytoplasm. RNA-binding component of the eukaryotic translation initiation factor 3 (eIF-3) complex, which is involved in protein synthesis of a specialized repertoire of mRNAs and, together with other initiation factors, stimulates binding of mRNA and methionyl-tRNAi to the 40S ribosome. The eIF-3 complex specifically targets and initiates translation of a subset of mRNAs involved in cell proliferation. This is Eukaryotic translation initiation factor 3 subunit A from Kluyveromyces lactis (strain ATCC 8585 / CBS 2359 / DSM 70799 / NBRC 1267 / NRRL Y-1140 / WM37) (Yeast).